The chain runs to 454 residues: MTTILKHLPINQRVGIAFSGGLDTSAALLWMQKKGAIPYAYTANLGQPDEEDYDAIPRKAMEYGAEKARLIDCRKQLVAEGIAAIQCGAFHNTTAGVTYFNTTPLGRAVTGTMLVAAMKEDGVNIWGDGSTYKGNDIERFYRYGLLTNAELKIYKPWLDTDFIDELGGRHEMSEFMIQSGFDYKMSTEKAYSTDSNMLGATHEAKDLEFLNSSVKIVNPIMGVKFWDENVVVKAEEVSVRFERGYPVALNGVVFDDSVELMMEANRIGGRHGLGMSDQIENRIIEAKSRGIYEAPGMALLHIAYERLLTGIHNEDTIEQYHANGRVLGRLLYQGRWFDPQALMLRDSAQRWVASEITGEVTLELRRGNDYSILNTVSENLTYQPERLTMEKGDSVFSPDDRIGQLTMRNLDITDTRKKLFSYATTGLLSASAEVGLPQVDNNNLTARGLQDKSK.

ATP is bound by residues 17-25 (AFSGGLDTS) and Ala43. Tyr99 is an L-citrulline binding site. The ATP site is built by Gly129 and Thr131. 3 residues coordinate L-aspartate: Thr131, Asn135, and Asp136. Asn135 serves as a coordination point for L-citrulline. Asp136 is an ATP binding site. The L-citrulline site is built by Arg139 and Ser192. Asp194 contacts ATP. L-citrulline-binding residues include Thr201, Glu203, and Glu280.

The protein belongs to the argininosuccinate synthase family. Type 2 subfamily. In terms of assembly, homotetramer.

The protein resides in the cytoplasm. The catalysed reaction is L-citrulline + L-aspartate + ATP = 2-(N(omega)-L-arginino)succinate + AMP + diphosphate + H(+). The protein operates within amino-acid biosynthesis; L-arginine biosynthesis; L-arginine from L-ornithine and carbamoyl phosphate: step 2/3. The chain is Argininosuccinate synthase from Yersinia enterocolitica serotype O:8 / biotype 1B (strain NCTC 13174 / 8081).